The sequence spans 149 residues: Low molecular weight protein-tyrosine-phosphatase Wzb (149 aa).

Catalysis depends on Cys9, which acts as the Nucleophile. Arg15 is a catalytic residue. Catalysis depends on Asp115, which acts as the Proton donor.

Belongs to the low molecular weight phosphotyrosine protein phosphatase family.

The catalysed reaction is O-phospho-L-tyrosyl-[protein] + H2O = L-tyrosyl-[protein] + phosphate. Its pathway is glycan metabolism; exopolysaccharide biosynthesis. Its function is as follows. Dephosphorylates Wzc. Required for the extracellular polysaccharide colanic acid synthesis. Probably involved in the export of colanic acid from the cell to medium. Involved in protection of cells against contact-dependent growth inhibition (CDI). This Salmonella typhimurium (strain LT2 / SGSC1412 / ATCC 700720) protein is Low molecular weight protein-tyrosine-phosphatase Wzb (wzb).